The primary structure comprises 405 residues: Imidazolonepropionase (405 aa).

Histidine 70 and histidine 72 together coordinate Fe(3+). The Zn(2+) site is built by histidine 70 and histidine 72. Residues arginine 79, tyrosine 142, and histidine 175 each coordinate 4-imidazolone-5-propanoate. Residue tyrosine 142 participates in N-formimidoyl-L-glutamate binding. Histidine 240 is a binding site for Fe(3+). Histidine 240 contributes to the Zn(2+) binding site. Glutamine 243 is a 4-imidazolone-5-propanoate binding site. Aspartate 315 serves as a coordination point for Fe(3+). Aspartate 315 lines the Zn(2+) pocket. Residues asparagine 317 and glycine 319 each contribute to the N-formimidoyl-L-glutamate site. Threonine 320 lines the 4-imidazolone-5-propanoate pocket.

It belongs to the metallo-dependent hydrolases superfamily. HutI family. Requires Zn(2+) as cofactor. It depends on Fe(3+) as a cofactor.

The protein localises to the cytoplasm. The catalysed reaction is 4-imidazolone-5-propanoate + H2O = N-formimidoyl-L-glutamate. It functions in the pathway amino-acid degradation; L-histidine degradation into L-glutamate; N-formimidoyl-L-glutamate from L-histidine: step 3/3. Functionally, catalyzes the hydrolytic cleavage of the carbon-nitrogen bond in imidazolone-5-propanoate to yield N-formimidoyl-L-glutamate. It is the third step in the universal histidine degradation pathway. The polypeptide is Imidazolonepropionase (Ectopseudomonas mendocina (strain ymp) (Pseudomonas mendocina)).